The sequence spans 1992 residues: Otoferlin (1992 aa).

C2 domains lie at 1–98 (MALV…EVSD), 241–362 (KRSK…HKWA), and 405–536 (IEGN…FLPT). Residues 1–1958 (MALVVHLKTV…IRYFIWHNYR (1958 aa)) are Cytoplasmic-facing. A disordered region spans residues 655–699 (PALAKKKKEGGGESEEEESELIHNSSEEEAEDDGDLTSVPSTPPM). C2 domains lie at 952–1077 (IQAV…PPRF) and 1124–1250 (RGPI…NNWA). Residues Asp-984, Asp-990, Asp-1046, and Asp-1048 each contribute to the Ca(2+) site. The stretch at 1282 to 1363 (VKVDLNEDEK…ESAEIKADDF (82 aa)) forms a coiled coil. 2 disordered regions span residues 1288-1311 (EDEK…EEEP) and 1354-1399 (ESAE…KPKV). A compositionally biased stretch (basic and acidic residues) spans 1356–1399 (AEIKADDFPMKGTKPKEKSKDKKSTKDKKKNNDGTEKRPPKPKV). C2 domains lie at 1470–1588 (DPNM…ATCG) and 1711–1860 (PAPG…KQCS). The Ca(2+) site is built by Asp-1503, Asp-1509, Asp-1558, Asp-1560, Asp-1566, Asp-1831, Ser-1834, and Asp-1837. A helical membrane pass occupies residues 1959 to 1979 (WLILKALALLLLLLLVGLFLY). Residues 1980-1992 (SIPGYLVKKLLGA) are Extracellular-facing.

It belongs to the ferlin family. Ca(2+) is required as a cofactor.

It localises to the cytoplasmic vesicle. The protein localises to the secretory vesicle. It is found in the synaptic vesicle membrane. The protein resides in the basolateral cell membrane. Its subcellular location is the endoplasmic reticulum membrane. It localises to the golgi apparatus membrane. The protein localises to the presynaptic cell membrane. It is found in the cell membrane. Its function is as follows. Key calcium ion sensor involved in the Ca(2+)-triggered synaptic vesicle-plasma membrane fusion and in the control of neurotransmitter release at these output synapses. In Danio rerio (Zebrafish), this protein is Otoferlin (otof).